We begin with the raw amino-acid sequence, 374 residues long: N5-carboxyaminoimidazole ribonucleotide synthase (374 aa).

ATP contacts are provided by residues R108, K148, 153-159, 183-186, E191, H214, and 266-267; these read GYDGKGQ, EQFL, and NE. In terms of domain architecture, ATP-grasp spans 112–296; it reads KQTLQKAGSK…QFDTHILAVT (185 aa).

This sequence belongs to the PurK/PurT family. Homodimer.

The enzyme catalyses 5-amino-1-(5-phospho-beta-D-ribosyl)imidazole + hydrogencarbonate + ATP = 5-carboxyamino-1-(5-phospho-D-ribosyl)imidazole + ADP + phosphate + 2 H(+). Its pathway is purine metabolism; IMP biosynthesis via de novo pathway; 5-amino-1-(5-phospho-D-ribosyl)imidazole-4-carboxylate from 5-amino-1-(5-phospho-D-ribosyl)imidazole (N5-CAIR route): step 1/2. Functionally, catalyzes the ATP-dependent conversion of 5-aminoimidazole ribonucleotide (AIR) and HCO(3)(-) to N5-carboxyaminoimidazole ribonucleotide (N5-CAIR). The chain is N5-carboxyaminoimidazole ribonucleotide synthase from Staphylococcus haemolyticus (strain JCSC1435).